A 547-amino-acid chain; its full sequence is KsdD-like steroid dehydrogenase MSMEG_5835 (547 aa).

Residue 5–36 (DVIVVGAGLAGLVAACELVERGHSVIIVDQEN) participates in FAD binding.

This sequence belongs to the FAD-dependent oxidoreductase 2 family. FAD is required as a cofactor.

The protein operates within lipid metabolism; steroid biosynthesis. Functionally, able to catalyze the elimination of the C-1 and C-2 hydrogen atoms of the A-ring from the polycyclic ring structure of 3-ketosteroids, but the ketosteroid dehydrogenase activity is low compared to KsdD in the cholesterol degradation process. The low activity could be due to different substrate specificity. This is KsdD-like steroid dehydrogenase MSMEG_5835 from Mycolicibacterium smegmatis (strain ATCC 700084 / mc(2)155) (Mycobacterium smegmatis).